Consider the following 240-residue polypeptide: Diglucosylglycerate octanoyltransferase (240 aa).

This sequence belongs to the OctT acyltransferase family. Homotetramer.

It carries out the reaction (2R)-2-O-[alpha-D-glucopyranosyl-(1-&gt;6)-alpha-D-glucopyranosyl]-glycerate + octanoyl-CoA = (2R)-2-O-[6-O-octanoyl-alpha-D-glucopyranosyl-(1-&gt;6)-alpha-D-glucopyranosyl]-glycerate + CoA. Its function is as follows. Sugar octanoyltransferase likely involved in the biosynthesis of mycobacterial methylglucose lipopolysaccharide (MGLP). Catalyzes the transfer of an octanoyl group from octanoyl-CoA to the C6 OH of the second glucose in diglucosylglycerate (DGG). Can also use hexanoyl-CoA as acyl donor in vitro. DGG is the preferred acceptor, but to a lesser extent, GG (glucosylglycerate) can be used as substrate. DGG and GG are the two earliest intermediates in MGLP biosynthesis. The chain is Diglucosylglycerate octanoyltransferase from Mycolicibacterium hassiacum (strain DSM 44199 / CIP 105218 / JCM 12690 / 3849) (Mycobacterium hassiacum).